A 306-amino-acid polypeptide reads, in one-letter code: tRNA pseudouridine synthase B (306 aa).

Asp-48 functions as the Nucleophile in the catalytic mechanism.

It belongs to the pseudouridine synthase TruB family. Type 1 subfamily.

It carries out the reaction uridine(55) in tRNA = pseudouridine(55) in tRNA. Responsible for synthesis of pseudouridine from uracil-55 in the psi GC loop of transfer RNAs. The sequence is that of tRNA pseudouridine synthase B from Haemophilus influenzae (strain 86-028NP).